We begin with the raw amino-acid sequence, 463 residues long: ATP-dependent protease ATPase subunit HslU (463 aa).

ATP contacts are provided by residues Ile-19, 61–66 (GVGKTE), Asp-277, Glu-341, and Arg-413.

The protein belongs to the ClpX chaperone family. HslU subfamily. A double ring-shaped homohexamer of HslV is capped on each side by a ring-shaped HslU homohexamer. The assembly of the HslU/HslV complex is dependent on binding of ATP.

It localises to the cytoplasm. Functionally, ATPase subunit of a proteasome-like degradation complex; this subunit has chaperone activity. The binding of ATP and its subsequent hydrolysis by HslU are essential for unfolding of protein substrates subsequently hydrolyzed by HslV. HslU recognizes the N-terminal part of its protein substrates and unfolds these before they are guided to HslV for hydrolysis. The protein is ATP-dependent protease ATPase subunit HslU of Bacillus cytotoxicus (strain DSM 22905 / CIP 110041 / 391-98 / NVH 391-98).